A 433-amino-acid chain; its full sequence is Acetyl-CoA acetyltransferase erg10A, mitochondrial (433 aa).

Residues 1 to 34 (MAIQTTTGLAARLVAKRATFPASRRNFSASRSAL) constitute a mitochondrion transit peptide. The active-site Acyl-thioester intermediate is the cysteine 124. A K(+)-binding site is contributed by tyrosine 219. The CoA site is built by asparagine 229 and lysine 262. A K(+)-binding site is contributed by alanine 280. CoA is bound at residue serine 284. Active-site proton acceptor residues include histidine 387 and cysteine 415. Residue asparagine 416 participates in chloride binding.

Belongs to the thiolase-like superfamily. Thiolase family. As to quaternary structure, homotetramer. K(+) serves as cofactor.

The protein localises to the mitochondrion. The enzyme catalyses 2 acetyl-CoA = acetoacetyl-CoA + CoA. It functions in the pathway metabolic intermediate biosynthesis; (R)-mevalonate biosynthesis; (R)-mevalonate from acetyl-CoA: step 1/3. Functionally, mitochondrial acetyl-CoA acetyltransferase that catalyzes both the formation and degradation of acetoacetyl-CoA. Has no overlapping function with erg10B and seems not to be involved in ergosterol biosynthesis. Plays an important role in growth, morphogenesis and maintaining mitochondrial function including the response to oxidative stresses. The protein is Acetyl-CoA acetyltransferase erg10A, mitochondrial of Aspergillus fumigatus (strain ATCC MYA-4609 / CBS 101355 / FGSC A1100 / Af293) (Neosartorya fumigata).